The sequence spans 470 residues: MNPNQKIITIGSVSIVLTTVGLLLQITSLCSIWFSHYNQVTQTNGQPCSNDTINYYNETFVNVTNVQNNYTTITEPSIPQAIHYSSGRDLCPVKGWAPLSKDNGIRIGSRGEVFVIREPFISCSINECRTFFLTQGALLNDKHSNGTVKDRSPFRTLMSCPIGVAPSPSNSRFESVAWSATACSDGPGWLTLGITGPDTTAVAVLKYNGVITDTLKSWKGNIMRTQESECVCQDEFCYTLVTDGPSDAQAFYKILKIKKGKIVGAKDVDATGFHFEECSCYPSGENVECVCRDNWRGSNRPWIRFNSDLDYQIGYVCSGVFGDNPRPVDGTGSCNSPVNNGKGRYGVKGFSFRYGDGVWIGRTKSLESRSGFEMVWDANGWVSTDKDSNGVQDIIDNDNWSGYSGSFSIRGETTGRNCTVPCFWVEMIRGQPKEKTIWTSGSSIAFCGVNSDTTSWSWPDGALLPFDIDK.

The Intravirion segment spans residues 1–6 (MNPNQK). The helical transmembrane segment at 7 to 29 (IITIGSVSIVLTTVGLLLQITSL) threads the bilayer. The segment at 11–33 (GSVSIVLTTVGLLLQITSLCSIW) is involved in apical transport and lipid raft association. Residues 30–470 (CSIWFSHYNQ…GALLPFDIDK (441 aa)) are Virion surface-facing. Residues 36–88 (HYNQVTQTNGQPCSNDTINYYNETFVNVTNVQNNYTTITEPSIPQAIHYSSGR) are hypervariable stalk region. N-linked (GlcNAc...) asparagine; by host glycosylation is found at asparagine 50, asparagine 57, asparagine 62, and asparagine 69. A head of neuraminidase region spans residues 90–470 (LCPVKGWAPL…GALLPFDIDK (381 aa)). 8 disulfide bridges follow: cysteine 91-cysteine 418, cysteine 123-cysteine 128, cysteine 183-cysteine 230, cysteine 232-cysteine 237, cysteine 278-cysteine 291, cysteine 280-cysteine 289, cysteine 317-cysteine 334, and cysteine 422-cysteine 447. Arginine 117 contributes to the substrate binding site. Asparagine 145 carries an N-linked (GlcNAc...) asparagine; by host glycan. Aspartate 150 serves as the catalytic Proton donor/acceptor. Arginine 151 serves as a coordination point for substrate. 276-277 (EE) serves as a coordination point for substrate. A substrate-binding site is contributed by arginine 292. Ca(2+) is bound by residues aspartate 293, glycine 297, and aspartate 323. Arginine 369 contributes to the substrate binding site. A glycan (N-linked (GlcNAc...) asparagine; by host) is linked at asparagine 399. Tyrosine 403 functions as the Nucleophile in the catalytic mechanism. Asparagine 417 carries N-linked (GlcNAc...) asparagine; by host glycosylation.

The protein belongs to the glycosyl hydrolase 34 family. In terms of assembly, homotetramer. The cofactor is Ca(2+). Post-translationally, N-glycosylated.

Its subcellular location is the virion membrane. It localises to the host apical cell membrane. The catalysed reaction is Hydrolysis of alpha-(2-&gt;3)-, alpha-(2-&gt;6)-, alpha-(2-&gt;8)- glycosidic linkages of terminal sialic acid residues in oligosaccharides, glycoproteins, glycolipids, colominic acid and synthetic substrates.. Inhibited by the neuraminidase inhibitors zanamivir (Relenza) and oseltamivir (Tamiflu). These drugs interfere with the release of progeny virus from infected cells and are effective against all influenza strains. Resistance to neuraminidase inhibitors is quite rare. In terms of biological role, catalyzes the removal of terminal sialic acid residues from viral and cellular glycoconjugates. Cleaves off the terminal sialic acids on the glycosylated HA during virus budding to facilitate virus release. Additionally helps virus spread through the circulation by further removing sialic acids from the cell surface. These cleavages prevent self-aggregation and ensure the efficient spread of the progeny virus from cell to cell. Otherwise, infection would be limited to one round of replication. Described as a receptor-destroying enzyme because it cleaves a terminal sialic acid from the cellular receptors. May facilitate viral invasion of the upper airways by cleaving the sialic acid moieties on the mucin of the airway epithelial cells. Likely to plays a role in the budding process through its association with lipid rafts during intracellular transport. May additionally display a raft-association independent effect on budding. Plays a role in the determination of host range restriction on replication and virulence. Sialidase activity in late endosome/lysosome traffic seems to enhance virus replication. The chain is Neuraminidase from Aves.